We begin with the raw amino-acid sequence, 529 residues long: GMP synthase [glutamine-hydrolyzing] (529 aa).

The 202-residue stretch at 3–204 (TVAIVDFGSQ…FLKIAGCTRD (202 aa)) folds into the Glutamine amidotransferase type-1 domain. Cys-87 serves as the catalytic Nucleophile. Active-site residues include His-179 and Glu-181. The region spanning 205-395 (WTMGSFLHTQ…LGLPSAILDR (191 aa)) is the GMPS ATP-PPase domain. 232–238 (SGGVDSS) contacts ATP.

Homodimer.

It carries out the reaction XMP + L-glutamine + ATP + H2O = GMP + L-glutamate + AMP + diphosphate + 2 H(+). It participates in purine metabolism; GMP biosynthesis; GMP from XMP (L-Gln route): step 1/1. Functionally, catalyzes the synthesis of GMP from XMP. In Anaplasma marginale (strain St. Maries), this protein is GMP synthase [glutamine-hydrolyzing].